A 34-amino-acid polypeptide reads, in one-letter code: GCANAYKSCNGPHTCCWGYNGYKKACICSGXNWK.

3 disulfides stabilise this stretch: Cys-2–Cys-16, Cys-9–Cys-26, and Cys-15–Cys-28.

This sequence belongs to the neurotoxin 02 (plectoxin) family. 01 (Tx3) subfamily. As to expression, expressed by the venom gland.

The protein resides in the secreted. Functionally, inhibits all known high-voltage activated calcium channels (L-, P/Q- and R-type currents) (Cav), and most effectively the P/Q- (Cav2.1/CACNA1A) and R-type (Cav2.3/CACNA1E) currents. In rat brain, inhibits glutamate release, neuronal death and loss of neurotransmission in the hippocampus resulting from ischemia. In vivo, induces rapid general flaccid paralysis followed by death in 10-30 minutes at dose levels of 5 ug per mouse. The polypeptide is Omega-ctenitoxin-Pn2a (Phoneutria nigriventer (Brazilian armed spider)).